Reading from the N-terminus, the 972-residue chain is mRNA transport regulator MTR10 (972 aa).

It localises to the nucleus. Involved in mRNA transport from nucleus to cytoplasm. This Saccharomyces cerevisiae (strain ATCC 204508 / S288c) (Baker's yeast) protein is mRNA transport regulator MTR10 (MTR10).